Here is a 405-residue protein sequence, read N- to C-terminus: Deoxyguanosinetriphosphate triphosphohydrolase-like protein (405 aa).

The 145-residue stretch at 75-219 (RLTHTIEVAQ…AAIADDIAYN (145 aa)) folds into the HD domain.

Belongs to the dGTPase family. Type 2 subfamily.

This is Deoxyguanosinetriphosphate triphosphohydrolase-like protein from Agrobacterium fabrum (strain C58 / ATCC 33970) (Agrobacterium tumefaciens (strain C58)).